The following is a 316-amino-acid chain: Zinc finger protein 367 (316 aa).

A disordered region spans residues 61–97 (VTLGPGSGSGAASPTRTSSSPAEADPLSCPEHLKDGI). A compositionally biased stretch (low complexity) spans 70–82 (GAASPTRTSSSPA). 2 consecutive C2H2-type zinc fingers follow at residues 121-143 (IRCN…KRTH) and 149-173 (YLCD…QRLH). The segment at 234–294 (QTREQRSPVP…GGVVTARRRL (61 aa)) is disordered. The segment covering 255-278 (EDQEQQDPLDFLPSDEGEEEEQEE) has biased composition (acidic residues). The stretch at 289-313 (TARRRLQEQRERLHGALALIELANN) forms a coiled coil.

Belongs to the krueppel C2H2-type zinc-finger protein family.

It localises to the nucleus. Its function is as follows. Transcriptional activator. The sequence is that of Zinc finger protein 367 (znf367) from Danio rerio (Zebrafish).